A 798-amino-acid chain; its full sequence is MLLSLKWLREFVPFEGTAAELGDRLTMLGLELEEIIRPFDAIEPIVVGHVVSRERHPEADKLSVCKVDVGQGEPLDIVCGAPNVAAGQRVPVALVGTTMPGGMVIKKAKLRGQPSHGMICSERELGLGEDHDGIMVLPESFRIGARLVDELDLDREVCDIAITPNRADCLSVLGLAREVALAFGLPLTMPALDLKEEGADASNALRIDIPDASLCPLFHGRVLEGAAVRKSPAWMRYRLIAVGVRPISNIVDVTNYILMELGQPLHAYDLDLLAGGRIEVSAAREGERLTTLDGVERVLTSNDLLIRDGEKPVGLAGVMGGAETEISDKSSRVFLEAAVFRPGTIRKTARRLGLSSEASYRFERGVDQVVCTYAMNRAAQLIAGLSGATLRPGICHNEPLPWQAPVLRFRRARGEALLGISLDETFCRETLERLGCKVDAADAADWKVTAPSHRRDFEREADLIEEVARVRGMDTIEPVLPKVMRPLDRAGAPESKYSFWLRLKHWAAGLGLNEAINYSFVGQKDLDHLNLAVDGRIPIMNPLTADQNVLRTELAPGLLQNLRHNIAQGNAGLRLFEVAHIFEADATSDTTARERARLDILVYGSRYDSQWPHVEADADYADIKGIVEHCLAFLHLEGATFTLAASHPFLMPCVDVAVQGRQVGVIGRVRPEIADAYHARKDAWLADLDLDVLRELHDAARIAFRSLPVYPPVRRDITVAAPGSLQVGAVLDHILGLRLPLLCGVELIDVFEPEGKDERNLTFRMTFRHASRTLKDAEVDKERDKVAHSLVEKLPVRI.

The tRNA-binding domain maps to F39–V148. A B5 domain is found at W402 to P478. Mg(2+) contacts are provided by D456, D462, E465, and E466. The FDX-ACB domain maps to P708–I798.

It belongs to the phenylalanyl-tRNA synthetase beta subunit family. Type 1 subfamily. In terms of assembly, tetramer of two alpha and two beta subunits. The cofactor is Mg(2+).

It localises to the cytoplasm. The catalysed reaction is tRNA(Phe) + L-phenylalanine + ATP = L-phenylalanyl-tRNA(Phe) + AMP + diphosphate + H(+). The polypeptide is Phenylalanine--tRNA ligase beta subunit (Nitratidesulfovibrio vulgaris (strain ATCC 29579 / DSM 644 / CCUG 34227 / NCIMB 8303 / VKM B-1760 / Hildenborough) (Desulfovibrio vulgaris)).